Here is a 184-residue protein sequence, read N- to C-terminus: Phosphonoformate cytidylyltransferase (184 aa).

The catalysed reaction is phosphonoformate + CTP = CMP-5'-phosphonoformate + diphosphate. It participates in secondary metabolite biosynthesis; bialaphos biosynthesis. In terms of biological role, catalyzes the displacement of the beta- and gamma-phosphates of CTP by phosphonoformate to produce CMP-5'-phosphonoformate, an intermediate in the biosynthesis of phosphinothricin tripeptide (PTT), also known as bialaphos (BA), a natural-product antibiotic and potent herbicide. In Streptomyces viridochromogenes (strain DSM 40736 / JCM 4977 / BCRC 1201 / Tue 494), this protein is Phosphonoformate cytidylyltransferase.